Consider the following 783-residue polypeptide: Cyclin-dependent kinase 11A (783 aa).

Basic and acidic residues predominate over residues 18–58 (QEKKRRKEQEEKAEIKRLKNSDDRDSKRDSLEEGELRDHCM). Residues 18–396 (QEKKRRKEQE…SALTEGDYVP (379 aa)) are disordered. S47 and S72 each carry phosphoserine. Residues 95 to 125 (EKVHHRKDEKRKEKWKHARVKEREHERRKRH) show a composition bias toward basic residues. 3 stretches are compositionally biased toward basic and acidic residues: residues 126-215 (REEQ…DKVK), 226-241 (PPRE…KPGE), and 252-264 (QLKE…RDLL). S271 carries the phosphoserine modification. Residues 279-290 (SAESSSAESGSG) show a composition bias toward low complexity. Composition is skewed to acidic residues over residues 291-352 (SEEE…EERE) and 371-380 (ESEEAEEEVG). Residues 427 to 647 (QCLNRIEEGT…VFKELGTPSE (221 aa)) enclose the Protein kinase domain. ATP contacts are provided by residues 432-440 (IEEGTYGVV) and K455. S470 is modified (phosphoserine; by CDK7). Phosphothreonine; by CDK7 is present on T476. D550 acts as the Proton acceptor in catalysis. Phosphoserine is present on S577. Position 582 is a phosphotyrosine (Y582). 2 positions are modified to phosphothreonine: T583 and T739. The disordered stretch occupies residues 721 to 783 (SMFPTWPAKS…AAGPGFSLKF (63 aa)). A Phosphoserine modification is found at S740.

Belongs to the protein kinase superfamily. CMGC Ser/Thr protein kinase family. CDC2/CDKX subfamily. In terms of assembly, the cleaved p110 isoform, p110C, binds to the serine/threonine kinase PAK1. The p58 isoform but not the p110 isoform or p110C interacts with CCND3. The p110 isoforms are found in large molecular weight complexes containing CCNL1 and SFRS7. Requires Mg(2+) as cofactor. In terms of processing, during apoptosis, induced by Fas or tumor necrosis factor, specific CKD11 p110 isoforms are cleaved by caspases to produce a protein (p110C) that contains the C-terminal kinase domain of the CDK11 proteins. Expressed ubiquitously. Some evidence of isoform-specific tissue distribution.

The protein localises to the cytoplasm. Its subcellular location is the nucleus. The enzyme catalyses L-seryl-[protein] + ATP = O-phospho-L-seryl-[protein] + ADP + H(+). The catalysed reaction is L-threonyl-[protein] + ATP = O-phospho-L-threonyl-[protein] + ADP + H(+). Phosphorylation at Thr-436 or Tyr-437 inactivates the enzyme, while phosphorylation at Thr-583 activates it. In terms of biological role, appears to play multiple roles in cell cycle progression, cytokinesis and apoptosis. The p110 isoforms have been suggested to be involved in pre-mRNA splicing, potentially by phosphorylating the splicing protein SFRS7. The p58 isoform may act as a negative regulator of normal cell cycle progression. The protein is Cyclin-dependent kinase 11A (CDK11A) of Homo sapiens (Human).